We begin with the raw amino-acid sequence, 316 residues long: Pantothenate kinase (316 aa).

95 to 102 (GSVAVGKS) provides a ligand contact to ATP.

This sequence belongs to the prokaryotic pantothenate kinase family.

The protein localises to the cytoplasm. The enzyme catalyses (R)-pantothenate + ATP = (R)-4'-phosphopantothenate + ADP + H(+). It functions in the pathway cofactor biosynthesis; coenzyme A biosynthesis; CoA from (R)-pantothenate: step 1/5. This Shigella dysenteriae serotype 1 (strain Sd197) protein is Pantothenate kinase.